The following is a 61-amino-acid chain: Small ribosomal subunit protein uS14B (61 aa).

Cys-24, Cys-27, Cys-40, and Cys-43 together coordinate Zn(2+).

This sequence belongs to the universal ribosomal protein uS14 family. Zinc-binding uS14 subfamily. In terms of assembly, part of the 30S ribosomal subunit. Contacts proteins S3 and S10. The cofactor is Zn(2+).

Functionally, binds 16S rRNA, required for the assembly of 30S particles and may also be responsible for determining the conformation of the 16S rRNA at the A site. This Listeria welshimeri serovar 6b (strain ATCC 35897 / DSM 20650 / CCUG 15529 / CIP 8149 / NCTC 11857 / SLCC 5334 / V8) protein is Small ribosomal subunit protein uS14B.